Reading from the N-terminus, the 54-residue chain is Large ribosomal subunit protein bL33 (54 aa).

The protein belongs to the bacterial ribosomal protein bL33 family.

This Roseiflexus castenholzii (strain DSM 13941 / HLO8) protein is Large ribosomal subunit protein bL33.